Consider the following 328-residue polypeptide: Tetraacyldisaccharide 4'-kinase (328 aa).

ATP is bound at residue asparagine 52–threonine 59.

Belongs to the LpxK family.

It carries out the reaction a lipid A disaccharide + ATP = a lipid IVA + ADP + H(+). Its pathway is glycolipid biosynthesis; lipid IV(A) biosynthesis; lipid IV(A) from (3R)-3-hydroxytetradecanoyl-[acyl-carrier-protein] and UDP-N-acetyl-alpha-D-glucosamine: step 6/6. In terms of biological role, transfers the gamma-phosphate of ATP to the 4'-position of a tetraacyldisaccharide 1-phosphate intermediate (termed DS-1-P) to form tetraacyldisaccharide 1,4'-bis-phosphate (lipid IVA). The protein is Tetraacyldisaccharide 4'-kinase of Jannaschia sp. (strain CCS1).